We begin with the raw amino-acid sequence, 130 residues long: Small ribosomal subunit protein uS9 (130 aa).

This sequence belongs to the universal ribosomal protein uS9 family.

This Desulfovibrio desulfuricans (strain ATCC 27774 / DSM 6949 / MB) protein is Small ribosomal subunit protein uS9.